The sequence spans 92 residues: Co-chaperonin GroES (92 aa).

This sequence belongs to the GroES chaperonin family. Heptamer of 7 subunits arranged in a ring. Interacts with the chaperonin GroEL.

It localises to the cytoplasm. Together with the chaperonin GroEL, plays an essential role in assisting protein folding. The GroEL-GroES system forms a nano-cage that allows encapsulation of the non-native substrate proteins and provides a physical environment optimized to promote and accelerate protein folding. GroES binds to the apical surface of the GroEL ring, thereby capping the opening of the GroEL channel. This is Co-chaperonin GroES from Thermotoga maritima (strain ATCC 43589 / DSM 3109 / JCM 10099 / NBRC 100826 / MSB8).